The following is a 245-amino-acid chain: uncharacterized protein (245 aa).

4 helical membrane-spanning segments follow: residues 10-30 (FYTL…SPWY), 94-114 (TLAF…YVHI), 134-154 (VLIG…FLII), and 196-216 (RGWI…IYCW).

It is found in the membrane. This is an uncharacterized protein from Dictyostelium discoideum (Social amoeba).